The following is a 234-amino-acid chain: Orotidine 5'-phosphate decarboxylase (234 aa).

Substrate is bound by residues aspartate 17, lysine 38, 65–74 (DLKLHDIPNT), threonine 122, arginine 184, glutamine 193, glycine 213, and arginine 214. Lysine 67 acts as the Proton donor in catalysis.

This sequence belongs to the OMP decarboxylase family. Type 1 subfamily. Homodimer.

It carries out the reaction orotidine 5'-phosphate + H(+) = UMP + CO2. It participates in pyrimidine metabolism; UMP biosynthesis via de novo pathway; UMP from orotate: step 2/2. In terms of biological role, catalyzes the decarboxylation of orotidine 5'-monophosphate (OMP) to uridine 5'-monophosphate (UMP). This chain is Orotidine 5'-phosphate decarboxylase, found in Thermosynechococcus vestitus (strain NIES-2133 / IAM M-273 / BP-1).